The sequence spans 485 residues: Cobyric acid synthase (485 aa).

One can recognise a GATase cobBQ-type domain in the interval 250–448; the sequence is TQTVAVIAYP…LHGMFEDPRV (199 aa). The Nucleophile role is filled by Cys-334. The active site involves His-440.

This sequence belongs to the CobB/CobQ family. CobQ subfamily.

It functions in the pathway cofactor biosynthesis; adenosylcobalamin biosynthesis. In terms of biological role, catalyzes amidations at positions B, D, E, and G on adenosylcobyrinic A,C-diamide. NH(2) groups are provided by glutamine, and one molecule of ATP is hydrogenolyzed for each amidation. This chain is Cobyric acid synthase, found in Polaromonas naphthalenivorans (strain CJ2).